The primary structure comprises 348 residues: Uroporphyrinogen decarboxylase (348 aa).

Substrate-binding positions include 28–32 (RQAGR), aspartate 78, tyrosine 154, threonine 209, and histidine 325.

Belongs to the uroporphyrinogen decarboxylase family. In terms of assembly, homodimer.

Its subcellular location is the cytoplasm. It catalyses the reaction uroporphyrinogen III + 4 H(+) = coproporphyrinogen III + 4 CO2. It functions in the pathway porphyrin-containing compound metabolism; protoporphyrin-IX biosynthesis; coproporphyrinogen-III from 5-aminolevulinate: step 4/4. Catalyzes the decarboxylation of four acetate groups of uroporphyrinogen-III to yield coproporphyrinogen-III. The sequence is that of Uroporphyrinogen decarboxylase from Rhodopseudomonas palustris (strain BisB5).